A 171-amino-acid polypeptide reads, in one-letter code: 6,7-dimethyl-8-ribityllumazine synthase (171 aa).

5-amino-6-(D-ribitylamino)uracil is bound by residues F24, 58 to 60 (ALE), and 82 to 84 (AVI). Residue 87 to 88 (ET) coordinates (2S)-2-hydroxy-3-oxobutyl phosphate. The active-site Proton donor is the H90. Residue N115 coordinates 5-amino-6-(D-ribitylamino)uracil. R129 contacts (2S)-2-hydroxy-3-oxobutyl phosphate. The disordered stretch occupies residues 150–171 (ALDQLGDDEDEEEDEEDEEERA). Over residues 154–171 (LGDDEDEEEDEEDEEERA) the composition is skewed to acidic residues.

It belongs to the DMRL synthase family.

The catalysed reaction is (2S)-2-hydroxy-3-oxobutyl phosphate + 5-amino-6-(D-ribitylamino)uracil = 6,7-dimethyl-8-(1-D-ribityl)lumazine + phosphate + 2 H2O + H(+). The protein operates within cofactor biosynthesis; riboflavin biosynthesis; riboflavin from 2-hydroxy-3-oxobutyl phosphate and 5-amino-6-(D-ribitylamino)uracil: step 1/2. In terms of biological role, catalyzes the formation of 6,7-dimethyl-8-ribityllumazine by condensation of 5-amino-6-(D-ribitylamino)uracil with 3,4-dihydroxy-2-butanone 4-phosphate. This is the penultimate step in the biosynthesis of riboflavin. This Burkholderia ambifaria (strain MC40-6) protein is 6,7-dimethyl-8-ribityllumazine synthase.